The primary structure comprises 408 residues: tRNA(Ile)-lysidine synthase (408 aa).

ATP is bound at residue 27 to 32 (SGGGDS).

The protein belongs to the tRNA(Ile)-lysidine synthase family.

The protein localises to the cytoplasm. It catalyses the reaction cytidine(34) in tRNA(Ile2) + L-lysine + ATP = lysidine(34) in tRNA(Ile2) + AMP + diphosphate + H(+). Its function is as follows. Ligates lysine onto the cytidine present at position 34 of the AUA codon-specific tRNA(Ile) that contains the anticodon CAU, in an ATP-dependent manner. Cytidine is converted to lysidine, thus changing the amino acid specificity of the tRNA from methionine to isoleucine. The chain is tRNA(Ile)-lysidine synthase from Caulobacter vibrioides (strain ATCC 19089 / CIP 103742 / CB 15) (Caulobacter crescentus).